Reading from the N-terminus, the 195-residue chain is Adenylate kinase (195 aa).

10-15 (GSGKGT) contacts ATP. The interval 30-59 (STGDILRAERAAGTLLGQQAQSYMDRGELV) is NMP. AMP is bound by residues T31, R36, 57–59 (ELV), 85–88 (GFPR), and Q92. The LID stretch occupies residues 126–140 (NRAKQAVNGQQRSDD). R127 contacts ATP. 2 residues coordinate AMP: R137 and R148. R176 contributes to the ATP binding site.

This sequence belongs to the adenylate kinase family. In terms of assembly, monomer.

It localises to the cytoplasm. It carries out the reaction AMP + ATP = 2 ADP. It functions in the pathway purine metabolism; AMP biosynthesis via salvage pathway; AMP from ADP: step 1/1. Its function is as follows. Catalyzes the reversible transfer of the terminal phosphate group between ATP and AMP. Plays an important role in cellular energy homeostasis and in adenine nucleotide metabolism. This is Adenylate kinase from Thermosynechococcus vestitus (strain NIES-2133 / IAM M-273 / BP-1).